Here is a 158-residue protein sequence, read N- to C-terminus: 6,7-dimethyl-8-ribityllumazine synthase (158 aa).

5-amino-6-(D-ribitylamino)uracil is bound by residues Phe-23, 61–63, and 85–87; these read SFE and AVI. 90–91 lines the (2S)-2-hydroxy-3-oxobutyl phosphate pocket; the sequence is ET. The active-site Proton donor is His-93. Phe-118 is a binding site for 5-amino-6-(D-ribitylamino)uracil. Residue Arg-132 participates in (2S)-2-hydroxy-3-oxobutyl phosphate binding.

It belongs to the DMRL synthase family.

It catalyses the reaction (2S)-2-hydroxy-3-oxobutyl phosphate + 5-amino-6-(D-ribitylamino)uracil = 6,7-dimethyl-8-(1-D-ribityl)lumazine + phosphate + 2 H2O + H(+). It participates in cofactor biosynthesis; riboflavin biosynthesis; riboflavin from 2-hydroxy-3-oxobutyl phosphate and 5-amino-6-(D-ribitylamino)uracil: step 1/2. Catalyzes the formation of 6,7-dimethyl-8-ribityllumazine by condensation of 5-amino-6-(D-ribitylamino)uracil with 3,4-dihydroxy-2-butanone 4-phosphate. This is the penultimate step in the biosynthesis of riboflavin. The protein is 6,7-dimethyl-8-ribityllumazine synthase of Prochlorococcus marinus (strain MIT 9215).